A 107-amino-acid chain; its full sequence is uncharacterized protein (107 aa).

This is an uncharacterized protein from Dictyostelium discoideum (Social amoeba).